Here is a 456-residue protein sequence, read N- to C-terminus: Na(+)-translocating NADH-quinone reductase subunit A (456 aa).

It belongs to the NqrA family. Composed of six subunits; NqrA, NqrB, NqrC, NqrD, NqrE and NqrF.

It catalyses the reaction a ubiquinone + n Na(+)(in) + NADH + H(+) = a ubiquinol + n Na(+)(out) + NAD(+). Its function is as follows. NQR complex catalyzes the reduction of ubiquinone-1 to ubiquinol by two successive reactions, coupled with the transport of Na(+) ions from the cytoplasm to the periplasm. NqrA to NqrE are probably involved in the second step, the conversion of ubisemiquinone to ubiquinol. The polypeptide is Na(+)-translocating NADH-quinone reductase subunit A (Rhodopirellula baltica (strain DSM 10527 / NCIMB 13988 / SH1)).